Reading from the N-terminus, the 146-residue chain is UPF0178 protein Helmi_09130 (146 aa).

The protein belongs to the UPF0178 family.

This chain is UPF0178 protein Helmi_09130, found in Heliobacterium modesticaldum (strain ATCC 51547 / Ice1).